A 191-amino-acid chain; its full sequence is MGLLSIIRKQKLRDKEIRCLILGLDNSGKSTIVNKLLPKDEQNNDGIMPTVGFQIHSLMIKDVTISLWDIGGQRTLRPFWDNYFDKTQAMIWCIDVSLSMRFDETLQELKELINRDENRIGYECAVIVVLNKIDLVEDKSELHRRCLLVESELKCLFKPDIRIELVKCSGVTGEGIDNLRDRLVESCHFTQ.

Residues 23-30 (GLDNSGKS), 69-73 (DIGGQ), and 131-134 (NKID) each bind GTP.

Implicated in yeast microtubule function. This chain is GTP-binding protein CIN4 (CIN4), found in Saccharomyces cerevisiae (strain ATCC 204508 / S288c) (Baker's yeast).